Here is an 801-residue protein sequence, read N- to C-terminus: Na(+)/H(+) antiporter subunit A1 (801 aa).

A run of 20 helical transmembrane segments spans residues 1-21, 30-50, 79-99, 117-137, 166-186, 206-226, 228-250, 265-285, 300-320, 337-357, 373-393, 427-447, 472-492, 522-542, 591-611, 623-643, 646-666, 671-691, 707-727, and 764-784; these read MSLL…IPFL, LGWF…SLIS, LGLL…LYSI, LFMG…LYLF, LIIT…LSLA, PFFI…SAQV, FYIW…HSAT, IFAI…ITLF, ILAF…GIGA, FVAA…LFMI, LGGL…TTLS, LGIL…VYSI, ILML…GLFP, GITP…LLLI, LVII…SVPF, VFEG…IFAK, LFSI…FIFF, LALT…LCFY, LTNA…GLIG, and MDTL…YTMI.

This sequence belongs to the CPA3 antiporters (TC 2.A.63) subunit A family. May form a heterooligomeric complex that consists of seven subunits: mnhA1, mnhB1, mnhC1, mnhD1, mnhE1, mnhF1 and mnhG1.

It is found in the cell membrane. Functionally, mnh complex is a Na(+)/H(+) antiporter involved in Na(+) excretion. The protein is Na(+)/H(+) antiporter subunit A1 (mnhA1) of Staphylococcus epidermidis (strain ATCC 35984 / DSM 28319 / BCRC 17069 / CCUG 31568 / BM 3577 / RP62A).